A 259-amino-acid chain; its full sequence is tRNA (guanine-N(7)-)-methyltransferase (259 aa).

Residues 1–73 (MGHHGQMHAQ…GPAEDPDRPG (73 aa)) are disordered. S-adenosyl-L-methionine contacts are provided by E91, E116, N143, and D166. D166 is a catalytic residue. Substrate-binding positions include K170, D202, and 238–241 (TKYE).

Belongs to the class I-like SAM-binding methyltransferase superfamily. TrmB family.

It catalyses the reaction guanosine(46) in tRNA + S-adenosyl-L-methionine = N(7)-methylguanosine(46) in tRNA + S-adenosyl-L-homocysteine. Its pathway is tRNA modification; N(7)-methylguanine-tRNA biosynthesis. Functionally, catalyzes the formation of N(7)-methylguanine at position 46 (m7G46) in tRNA. The protein is tRNA (guanine-N(7)-)-methyltransferase of Mycolicibacterium paratuberculosis (strain ATCC BAA-968 / K-10) (Mycobacterium paratuberculosis).